A 223-amino-acid chain; its full sequence is Cytochrome c biogenesis ATP-binding export protein CcmA (223 aa).

An ABC transporter domain is found at 20–222 (LAAHALTYSR…PTRLLHLKKA (203 aa)). 52–59 (GPNGIGKT) contacts ATP.

This sequence belongs to the ABC transporter superfamily. CcmA exporter (TC 3.A.1.107) family. In terms of assembly, the complex is composed of two ATP-binding proteins (CcmA) and two transmembrane proteins (CcmB).

It is found in the cell inner membrane. The enzyme catalyses heme b(in) + ATP + H2O = heme b(out) + ADP + phosphate + H(+). Part of the ABC transporter complex CcmAB involved in the biogenesis of c-type cytochromes; once thought to export heme, this seems not to be the case, but its exact role is uncertain. Responsible for energy coupling to the transport system. In Xylella fastidiosa (strain 9a5c), this protein is Cytochrome c biogenesis ATP-binding export protein CcmA.